A 157-amino-acid chain; its full sequence is Transcription elongation factor GreA (157 aa).

Residues 46 to 73 (AEYHSARERQSFIEGRIAELEEIISAAE) are a coiled coil.

It belongs to the GreA/GreB family.

Its function is as follows. Necessary for efficient RNA polymerase transcription elongation past template-encoded arresting sites. The arresting sites in DNA have the property of trapping a certain fraction of elongating RNA polymerases that pass through, resulting in locked ternary complexes. Cleavage of the nascent transcript by cleavage factors such as GreA or GreB allows the resumption of elongation from the new 3'terminus. GreA releases sequences of 2 to 3 nucleotides. The protein is Transcription elongation factor GreA of Acidiphilium cryptum (strain JF-5).